Consider the following 430-residue polypeptide: tRNA(Ile)-lysidine synthase (430 aa).

21 to 26 contributes to the ATP binding site; it reads SGGLDS.

The protein belongs to the tRNA(Ile)-lysidine synthase family.

Its subcellular location is the cytoplasm. The catalysed reaction is cytidine(34) in tRNA(Ile2) + L-lysine + ATP = lysidine(34) in tRNA(Ile2) + AMP + diphosphate + H(+). In terms of biological role, ligates lysine onto the cytidine present at position 34 of the AUA codon-specific tRNA(Ile) that contains the anticodon CAU, in an ATP-dependent manner. Cytidine is converted to lysidine, thus changing the amino acid specificity of the tRNA from methionine to isoleucine. The polypeptide is tRNA(Ile)-lysidine synthase (Salmonella typhi).